The following is a 180-amino-acid chain: NAD(P)H-quinone oxidoreductase subunit I, chloroplastic (180 aa).

4Fe-4S ferredoxin-type domains follow at residues 55–84 and 95–124; these read GRIH…VDWK and LNYS…MTEE. Residues Cys-64, Cys-67, Cys-70, Cys-74, Cys-104, Cys-107, Cys-110, and Cys-114 each contribute to the [4Fe-4S] cluster site.

Belongs to the complex I 23 kDa subunit family. NDH is composed of at least 16 different subunits, 5 of which are encoded in the nucleus. It depends on [4Fe-4S] cluster as a cofactor.

The protein localises to the plastid. It localises to the chloroplast thylakoid membrane. It carries out the reaction a plastoquinone + NADH + (n+1) H(+)(in) = a plastoquinol + NAD(+) + n H(+)(out). It catalyses the reaction a plastoquinone + NADPH + (n+1) H(+)(in) = a plastoquinol + NADP(+) + n H(+)(out). Its function is as follows. NDH shuttles electrons from NAD(P)H:plastoquinone, via FMN and iron-sulfur (Fe-S) centers, to quinones in the photosynthetic chain and possibly in a chloroplast respiratory chain. The immediate electron acceptor for the enzyme in this species is believed to be plastoquinone. Couples the redox reaction to proton translocation, and thus conserves the redox energy in a proton gradient. In Nandina domestica (Heavenly bamboo), this protein is NAD(P)H-quinone oxidoreductase subunit I, chloroplastic.